The chain runs to 277 residues: tRNA pseudouridine synthase B (277 aa).

Asp-38 serves as the catalytic Nucleophile.

Belongs to the pseudouridine synthase TruB family. Type 1 subfamily.

It carries out the reaction uridine(55) in tRNA = pseudouridine(55) in tRNA. Functionally, responsible for synthesis of pseudouridine from uracil-55 in the psi GC loop of transfer RNAs. This Sulfurovum sp. (strain NBC37-1) protein is tRNA pseudouridine synthase B.